The primary structure comprises 487 residues: Glycogen synthase 1 (487 aa).

Lys-15 contacts ADP-alpha-D-glucose.

It belongs to the glycosyltransferase 1 family. Bacterial/plant glycogen synthase subfamily.

It carries out the reaction [(1-&gt;4)-alpha-D-glucosyl](n) + ADP-alpha-D-glucose = [(1-&gt;4)-alpha-D-glucosyl](n+1) + ADP + H(+). Its pathway is glycan biosynthesis; glycogen biosynthesis. Functionally, synthesizes alpha-1,4-glucan chains using ADP-glucose. In Nitrosococcus oceani (strain ATCC 19707 / BCRC 17464 / JCM 30415 / NCIMB 11848 / C-107), this protein is Glycogen synthase 1.